We begin with the raw amino-acid sequence, 376 residues long: Carbamoyl phosphate synthase small chain (376 aa).

Residues 1 to 187 form a CPSase region; it reads MKALLALEDG…KEDGSFLWKQ (187 aa). The L-glutamine site is built by Ser-45, Gly-239, and Gly-241. Positions 189–376 constitute a Glutamine amidotransferase type-1 domain; the sequence is KIPLIVYDYG…KEVVLLKLGC (188 aa). The Nucleophile role is filled by Cys-266. Residues Leu-267, Gln-270, Asn-308, Gly-310, and Phe-311 each contribute to the L-glutamine site. Catalysis depends on residues His-349 and Glu-351.

It belongs to the CarA family. In terms of assembly, composed of two chains; the small (or glutamine) chain promotes the hydrolysis of glutamine to ammonia, which is used by the large (or ammonia) chain to synthesize carbamoyl phosphate. Tetramer of heterodimers (alpha,beta)4.

It carries out the reaction hydrogencarbonate + L-glutamine + 2 ATP + H2O = carbamoyl phosphate + L-glutamate + 2 ADP + phosphate + 2 H(+). The enzyme catalyses L-glutamine + H2O = L-glutamate + NH4(+). Its pathway is amino-acid biosynthesis; L-arginine biosynthesis; carbamoyl phosphate from bicarbonate: step 1/1. It participates in pyrimidine metabolism; UMP biosynthesis via de novo pathway; (S)-dihydroorotate from bicarbonate: step 1/3. Its function is as follows. Small subunit of the glutamine-dependent carbamoyl phosphate synthetase (CPSase). CPSase catalyzes the formation of carbamoyl phosphate from the ammonia moiety of glutamine, carbonate, and phosphate donated by ATP, constituting the first step of 2 biosynthetic pathways, one leading to arginine and/or urea and the other to pyrimidine nucleotides. The small subunit (glutamine amidotransferase) binds and cleaves glutamine to supply the large subunit with the substrate ammonia. The chain is Carbamoyl phosphate synthase small chain from Lawsonia intracellularis (strain PHE/MN1-00).